We begin with the raw amino-acid sequence, 353 residues long: Phosphate acyltransferase (353 aa).

Belongs to the PlsX family. As to quaternary structure, homodimer. Probably interacts with PlsY.

Its subcellular location is the cytoplasm. The catalysed reaction is a fatty acyl-[ACP] + phosphate = an acyl phosphate + holo-[ACP]. The protein operates within lipid metabolism; phospholipid metabolism. Functionally, catalyzes the reversible formation of acyl-phosphate (acyl-PO(4)) from acyl-[acyl-carrier-protein] (acyl-ACP). This enzyme utilizes acyl-ACP as fatty acyl donor, but not acyl-CoA. The sequence is that of Phosphate acyltransferase from Bradyrhizobium sp. (strain BTAi1 / ATCC BAA-1182).